The sequence spans 891 residues: Dynein axonemal intermediate chain 3 (891 aa).

A compositionally biased stretch (basic residues) spans 1-17 (MAPKQKKKTSRGKKRLK). Residues 1–22 (MAPKQKKKTSRGKKRLKPVLAA) form a disordered region. WD repeat units lie at residues 395 to 435 (ESPD…DRIE), 477 to 533 (GHKK…PLTP), 670 to 709 (IHDG…GPLL), and 713 to 753 (CAPK…HEPA). Positions 818–861 (LEYVEQRKKIREQEKKEMELEMAKKKVKTYQKSKEQMQAELKMD) form a coiled coil.

Interacts with ACTR2; this interaction reduces binding of the Arp2/3 complex to the VCA domain of nucleation promoting factors. Part of the multisubunit axonemal dynein complex formed at least of two heavy chains and a number of intermediate and light chains. Found in a associated with the catalytic heavy chain DNAH2, the intermediate chain DNAI4, and the light chain DYNLT1.

The protein localises to the cytoplasm. Acts as a negative regulator of cell migration, invasion, and metastasis downstream of p53/TP53, through inhibition of Arp2/3 complex-mediated actin polymerization. Via its association with the multisubunit axonemal dynein complex, is potentially involved in the regulation of cilia function. May play a role in osteogenesis of dental tissue-derived mesenchymal stem cells. The polypeptide is Dynein axonemal intermediate chain 3 (Homo sapiens (Human)).